The sequence spans 308 residues: ADP-L-glycero-D-manno-heptose-6-epimerase (308 aa).

NADP(+)-binding positions include 10–11, 31–32, lysine 38, lysine 53, 75–79, and asparagine 92; these read FI, DN, and EGACS. Catalysis depends on tyrosine 139, which acts as the Proton acceptor. Lysine 143 is an NADP(+) binding site. Residue asparagine 168 coordinates substrate. Valine 169 and lysine 177 together coordinate NADP(+). Catalysis depends on lysine 177, which acts as the Proton acceptor. Substrate contacts are provided by residues serine 179, histidine 186, 200–203, arginine 208, and tyrosine 271; that span reads FAGS.

It belongs to the NAD(P)-dependent epimerase/dehydratase family. HldD subfamily. In terms of assembly, homopentamer. The cofactor is NADP(+).

It catalyses the reaction ADP-D-glycero-beta-D-manno-heptose = ADP-L-glycero-beta-D-manno-heptose. The protein operates within nucleotide-sugar biosynthesis; ADP-L-glycero-beta-D-manno-heptose biosynthesis; ADP-L-glycero-beta-D-manno-heptose from D-glycero-beta-D-manno-heptose 7-phosphate: step 4/4. Catalyzes the interconversion between ADP-D-glycero-beta-D-manno-heptose and ADP-L-glycero-beta-D-manno-heptose via an epimerization at carbon 6 of the heptose. In Haemophilus influenzae (strain PittGG), this protein is ADP-L-glycero-D-manno-heptose-6-epimerase.